The following is a 255-amino-acid chain: MFSASTTPEQPLGLSGDATPPLPTSVPLDWAAFRRAFLIDDAWRPLLEPELANPLTARLLAEYDRRCQTEEVLPPREDVFSWTRYCTPDDVRVVIIGQDPYHHPGQAHGLAFSVRADVPVPPSLRNVLAAVKNCYPDARMSGRGCLEKWARDGVLLLNTTLTVKRGAAASHSKLGWDRFVGGVVQRLAARRPGLVFMLWGAHAQNAIRPDPRQHYVLKFSHPSPLSKVPFGTCQHFLAANRYLETRDIMPIDWSV.

Residues 1–20 (MFSASTTPEQPLGLSGDATP) form a disordered region. Asp-99 functions as the Proton acceptor in the catalytic mechanism.

The protein belongs to the uracil-DNA glycosylase (UDG) superfamily. UNG family.

The protein localises to the host nucleus. It catalyses the reaction Hydrolyzes single-stranded DNA or mismatched double-stranded DNA and polynucleotides, releasing free uracil.. Excises uracil residues from the DNA which can arise as a result of misincorporation of dUMP residues by DNA polymerase or deamination of cytosines. Therefore may reduce deleterious uracil incorporation into the viral genome, particularly in terminally differentiated cells which lack DNA repair enzymes. This Human herpesvirus 2 (strain HG52) (HHV-2) protein is Uracil-DNA glycosylase.